Here is a 1410-residue protein sequence, read N- to C-terminus: ABC transporter C family member 13 (1410 aa).

8 helical membrane-spanning segments follow: residues 23–43 (IVLGFGANVVTLLLILILTIT), 60–80 (LLYVTPALGACLSCVDLVLLV), 88–108 (VILCFVPLSGFVMWIAVILSL), 122–142 (ILCFWWIFRFLTDALHLNMIF), 148–168 (QEICLIMLDIAFGISINVLRI), 391–411 (LSGLAITILLIPVNKWISVLI), 474–494 (VFFWATTPTLFSLCTFGLFAL), and 505–525 (FTCLALFNSLISPLNSFPWVI). The region spanning 255 to 530 (CNNYSTPSLI…FPWVINGLID (276 aa)) is the ABC transmembrane type-1 1 domain. The 228-residue stretch at 564 to 791 (VCVEDASCTW…ISPTFSLTNE (228 aa)) folds into the ABC transporter 1 domain. ATP is bound at residue 602 to 609 (GEVGSGKT). Helical transmembrane passes span 844 to 864 (AVFSGWFITIVILVSAVLMQG), 889 to 909 (TSFYLMVLCIFCIINSILTLV), 963 to 985 (SLPFILNILLANFVGLLGIIVVL), 990 to 1009 (VLFLLLLLPFWYIYSKLQVF), 1087 to 1107 (IVLFVAVMAVLGSGGNFPISF), and 1111 to 1131 (GLVGLALSYAAPLVSLLGSLL). Residues 852 to 1139 (TIVILVSAVL…LLTSFTETEK (288 aa)) enclose the ABC transmembrane type-1 2 domain. In terms of domain architecture, ABC transporter 2 spans 1174–1407 (VEFHNVTMRY…DSSTFSSFVR (234 aa)). 1208 to 1215 (GRTGAGKS) is a binding site for ATP.

It belongs to the ABC transporter superfamily. ABCC family. Conjugate transporter (TC 3.A.1.208) subfamily. In terms of tissue distribution, ubiquitous.

It localises to the membrane. The catalysed reaction is ATP + H2O + xenobioticSide 1 = ADP + phosphate + xenobioticSide 2.. Functionally, pump for glutathione S-conjugates. In Arabidopsis thaliana (Mouse-ear cress), this protein is ABC transporter C family member 13 (ABCC13).